We begin with the raw amino-acid sequence, 111 residues long: Large ribosomal subunit protein uL22 (111 aa).

Belongs to the universal ribosomal protein uL22 family. As to quaternary structure, part of the 50S ribosomal subunit.

In terms of biological role, this protein binds specifically to 23S rRNA; its binding is stimulated by other ribosomal proteins, e.g. L4, L17, and L20. It is important during the early stages of 50S assembly. It makes multiple contacts with different domains of the 23S rRNA in the assembled 50S subunit and ribosome. Its function is as follows. The globular domain of the protein is located near the polypeptide exit tunnel on the outside of the subunit, while an extended beta-hairpin is found that lines the wall of the exit tunnel in the center of the 70S ribosome. This Chlamydia trachomatis serovar L2b (strain UCH-1/proctitis) protein is Large ribosomal subunit protein uL22.